Reading from the N-terminus, the 90-residue chain is Probable dynein light chain 2, cytoplasmic (90 aa).

The protein belongs to the dynein light chain family.

It is found in the cytoplasm. It localises to the cytoskeleton. Functionally, acts as one of several non-catalytic accessory components of a dynein complex. In Caenorhabditis elegans, this protein is Probable dynein light chain 2, cytoplasmic (dlc-2).